A 332-amino-acid polypeptide reads, in one-letter code: Thiamine-binding periplasmic protein (332 aa).

The N-terminal stretch at 1–20 (MKLLKLTLISTALFSTAALA) is a signal peptide. Residues tryptophan 202 and 220 to 223 (YSTS) each bind thiamine.

The protein belongs to the bacterial solute-binding protein 1 family. In terms of assembly, the complex is composed of two ATP-binding proteins (ThiQ), two transmembrane proteins (ThiP) and a solute-binding protein (ThiB).

The protein resides in the periplasm. Part of the ABC transporter complex ThiBPQ involved in thiamine import. This Haemophilus influenzae (strain ATCC 51907 / DSM 11121 / KW20 / Rd) protein is Thiamine-binding periplasmic protein (thiB).